A 65-amino-acid chain; its full sequence is Small ribosomal subunit protein bS21 (65 aa).

A disordered region spans residues 44–65 (DDRLKRSRGKRRAQRANEERNS). Over residues 48 to 57 (KRSRGKRRAQ) the composition is skewed to basic residues.

Belongs to the bacterial ribosomal protein bS21 family.

This is Small ribosomal subunit protein bS21 from Prosthecochloris aestuarii (strain DSM 271 / SK 413).